The chain runs to 379 residues: 23S rRNA (uracil(747)-C(5))-methyltransferase RlmC (379 aa).

Residues Cys-3, Cys-11, Cys-14, and Cys-86 each coordinate [4Fe-4S] cluster. Residues Gln-211, Phe-240, Glu-262, and Asn-310 each coordinate S-adenosyl-L-methionine. The active-site Nucleophile is the Cys-337.

The protein belongs to the class I-like SAM-binding methyltransferase superfamily. RNA M5U methyltransferase family. RlmC subfamily.

It catalyses the reaction uridine(747) in 23S rRNA + S-adenosyl-L-methionine = 5-methyluridine(747) in 23S rRNA + S-adenosyl-L-homocysteine + H(+). Its function is as follows. Catalyzes the formation of 5-methyl-uridine at position 747 (m5U747) in 23S rRNA. This chain is 23S rRNA (uracil(747)-C(5))-methyltransferase RlmC, found in Halothiobacillus neapolitanus (strain ATCC 23641 / c2) (Thiobacillus neapolitanus).